An 829-amino-acid polypeptide reads, in one-letter code: Periplasmic nitrate reductase (829 aa).

The tat-type signal signal peptide spans 1–30 (MKLSRRDFMKANAVAAAAAVAGVSAPTLAA). Residues 41–97 (IKWDKAPCRFCGTGCSVLVGSQDGRVVATQGDPDAPVNRGLNCIKGYFLSKIMYGED) enclose the 4Fe-4S Mo/W bis-MGD-type domain. Positions 48, 51, 55, and 83 each coordinate [4Fe-4S] cluster. Residues Lys-85, Gln-152, Asn-177, Cys-181, 214 to 221 (WGSNMAEM), 245 to 249 (STFEH), 264 to 266 (QTD), Met-374, Gln-378, Asn-484, 510 to 511 (SD), Lys-533, Asp-560, and 719 to 728 (TGRVLEHWHT) each bind Mo-bis(molybdopterin guanine dinucleotide). Phe-795 is a substrate binding site. 2 residues coordinate Mo-bis(molybdopterin guanine dinucleotide): Asn-803 and Lys-820.

It belongs to the prokaryotic molybdopterin-containing oxidoreductase family. NasA/NapA/NarB subfamily. Component of the periplasmic nitrate reductase NapAB complex composed of NapA and NapB. The cofactor is [4Fe-4S] cluster. Mo-bis(molybdopterin guanine dinucleotide) is required as a cofactor. In terms of processing, predicted to be exported by the Tat system. The position of the signal peptide cleavage has not been experimentally proven.

The protein localises to the periplasm. The enzyme catalyses 2 Fe(II)-[cytochrome] + nitrate + 2 H(+) = 2 Fe(III)-[cytochrome] + nitrite + H2O. In terms of biological role, catalytic subunit of the periplasmic nitrate reductase complex NapAB. Receives electrons from NapB and catalyzes the reduction of nitrate to nitrite. The chain is Periplasmic nitrate reductase from Aeromonas salmonicida (strain A449).